The sequence spans 145 residues: 6-pyruvoyl tetrahydrobiopterin synthase (145 aa).

Position 19 is a phosphoserine; by PKG (Ser19). His24 is a Zn(2+) binding site. Ser28 carries the phosphoserine modification. Cys43 functions as the Proton acceptor in the catalytic mechanism. Zn(2+) is bound by residues His49 and His51. The Charge relay system role is filled by His90. A Phosphotyrosine modification is found at Tyr128. Glu134 serves as the catalytic Charge relay system.

It belongs to the PTPS family. Homohexamer formed of two homotrimers in a head to head fashion. It depends on Zn(2+) as a cofactor. Phosphorylation of Ser-19 is required for maximal enzyme activity.

It catalyses the reaction 7,8-dihydroneopterin 3'-triphosphate = 6-pyruvoyl-5,6,7,8-tetrahydropterin + triphosphate + H(+). Its pathway is cofactor biosynthesis; tetrahydrobiopterin biosynthesis; tetrahydrobiopterin from 7,8-dihydroneopterin triphosphate: step 1/3. Functionally, involved in the biosynthesis of tetrahydrobiopterin, an essential cofactor of aromatic amino acid hydroxylases. Catalyzes the transformation of 7,8-dihydroneopterin triphosphate into 6-pyruvoyl tetrahydropterin. The chain is 6-pyruvoyl tetrahydrobiopterin synthase (PTS) from Homo sapiens (Human).